A 359-amino-acid chain; its full sequence is DNA polymerase IV (359 aa).

The UmuC domain occupies Ile4 to Gly185. Mg(2+) contacts are provided by Asp8 and Asp103. Glu104 is an active-site residue.

The protein belongs to the DNA polymerase type-Y family. As to quaternary structure, monomer. Mg(2+) serves as cofactor.

It localises to the cytoplasm. The enzyme catalyses DNA(n) + a 2'-deoxyribonucleoside 5'-triphosphate = DNA(n+1) + diphosphate. Functionally, poorly processive, error-prone DNA polymerase involved in untargeted mutagenesis. Copies undamaged DNA at stalled replication forks, which arise in vivo from mismatched or misaligned primer ends. These misaligned primers can be extended by PolIV. Exhibits no 3'-5' exonuclease (proofreading) activity. May be involved in translesional synthesis, in conjunction with the beta clamp from PolIII. The chain is DNA polymerase IV from Shewanella sp. (strain MR-4).